The following is a 355-amino-acid chain: Transcription factor TCP13 (355 aa).

The disordered stretch occupies residues 1–57 (MNIVSWKDANDEVAGGATTRREREVKEDQEETEVRATSGKTVIKKQPTSISSSSSSW). A TCP domain is found at 74 to 132 (GKDRHSKVCTLRGLRDRRVRLSVPTAIQLYDLQERLGVDQPSKAVDWLLDAAKEEIDEL). Residues 329-355 (TNSTTTANMSRHLGSERCTSRGSDHHM) form a disordered region. Over residues 341–355 (LGSERCTSRGSDHHM) the composition is skewed to basic and acidic residues.

In terms of assembly, interacts with AHL27 and AHL29. Interacts with SPL. Interacts with KIN10; KIN11 and FLZ3. Expressed in cotyledons, particularly in the vascular region, in leaves, buds, flowers and immature siliques, and, to a lower extent, in roots.

It is found in the nucleus. The protein localises to the plastid. The protein resides in the chloroplast. Its function is as follows. Plays a pivotal role in the control of morphogenesis of shoot organs by negatively regulating the expression of boundary-specific genes such as CUC genes, probably through the induction of miRNA (e.g. miR164). Binds to the 3'-ACC-5' repeats in the light-responsive promoter (LRP) of psbD, and activates its transcription. Participates in ovule development. This chain is Transcription factor TCP13 (TCP13), found in Arabidopsis thaliana (Mouse-ear cress).